Consider the following 146-residue polypeptide: Putative nickel-responsive regulator 1 (146 aa).

Ni(2+) contacts are provided by histidine 81, histidine 92, tyrosine 94, and cysteine 100.

Belongs to the transcriptional regulatory CopG/NikR family. It depends on Ni(2+) as a cofactor.

Transcriptional regulator. The sequence is that of Putative nickel-responsive regulator 1 from Methanosarcina mazei (strain ATCC BAA-159 / DSM 3647 / Goe1 / Go1 / JCM 11833 / OCM 88) (Methanosarcina frisia).